Consider the following 248-residue polypeptide: Allergin-1 (248 aa).

A signal peptide spans 1 to 33; it reads MGDDDTPVCLSVASCKGVSCWLDKLLLWALTLS. Over 34–150 the chain is Extracellular; it reads ITLRNTAVDC…DESCSSCLLS (117 aa). Residues 54-137 enclose the Ig-like C2-type domain; the sequence is PNLNSSMSVV…SKYSQNFNFT (84 aa). The N-linked (GlcNAc...) asparagine glycan is linked to Asn-68. A disulfide bridge connects residues Cys-73 and Cys-120. Asn-135 carries an N-linked (GlcNAc...) asparagine glycan. A helical membrane pass occupies residues 151-171; that stretch reads LLLPGVLLGLILPGLAFLIYL. The Cytoplasmic portion of the chain corresponds to 172–248; the sequence is KYKKGCTGKT…DDYIYSELTY (77 aa). 2 short sequence motifs (ITIM motif) span residues 216–221 and 241–246; these read IHYTTP and YIYSEL. A phosphotyrosine mark is found at Tyr-218 and Tyr-243.

Monomer. Interacts (tyrosine-phosphorylated) with PTPN6, PTPN11 and INPP5D. N-glycosylated. Mast cell-specific. Expressed in primary and transformed mast cells.

The protein localises to the cell membrane. Functionally, immunoglobulin-like receptor which plays an inhibitory role in degranulation of mast cells. Negatively regulates IgE-mediated mast cell activation and suppresses the type I immediate hypersensitivity reaction. This chain is Allergin-1 (Milr1), found in Rattus norvegicus (Rat).